The following is a 254-amino-acid chain: Protein PET122, mitochondrial (254 aa).

The transit peptide at 1 to 8 (MLTITKRL) directs the protein to the mitochondrion. Residues 185–254 (QAAALALFGR…IKRRGFEINT (70 aa)) are essential for PET122 function.

Its subcellular location is the mitochondrion inner membrane. Its function is as follows. Required for expression of the mitochondrial gene for cytochrome c oxidase subunit 3 (COX3). PET122 seems to work by directly interacting with the small ribosomal subunit to promote translation initiation on the COX3 mRNA. This chain is Protein PET122, mitochondrial (PET122), found in Saccharomyces cerevisiae (strain ATCC 204508 / S288c) (Baker's yeast).